A 269-amino-acid chain; its full sequence is MEKKIGFIGCGNMGKAILGGLIASGQVLPGQIWVYTPSPDKVAALHDQFGINAAESAQEVAQIADIIFAAVKPGIMIKVLSEITSSLNKDSLVVSIAAGVTLDQLARALGHDRKIIRAMPNTPALVNAGMTSVTPNALVTPEDTADVLNIFRCFGEAEVIAEPMIHPVVGVSGSSPAYVFMFIEAMADAAVLGGMPRAQAYKFAAQAVMGSAKMVLETGEHPGALKDMVCSPGGTTIEAVRVLEEKGFRAAVIEAMTKCMEKSEKLSKS.

It belongs to the pyrroline-5-carboxylate reductase family.

The protein resides in the cytoplasm. It carries out the reaction L-proline + NADP(+) = (S)-1-pyrroline-5-carboxylate + NADPH + 2 H(+). The enzyme catalyses L-proline + NAD(+) = (S)-1-pyrroline-5-carboxylate + NADH + 2 H(+). It participates in amino-acid biosynthesis; L-proline biosynthesis; L-proline from L-glutamate 5-semialdehyde: step 1/1. With respect to regulation, inhibited by p-chloromercuribenzoate. Its function is as follows. Catalyzes the reduction of 1-pyrroline-5-carboxylate (PCA) to L-proline. Does not catalyze the reverse reaction. The polypeptide is Pyrroline-5-carboxylate reductase (Escherichia coli (strain K12)).